The chain runs to 257 residues: Kallikrein-1 (257 aa).

Positions 1-18 (MWFLVLCLALSLGGTGRA) are cleaved as a signal peptide. A propeptide spans 19–24 (PPIQSR) (activation peptide). The Peptidase S1 domain maps to 25–254 (IVGGWECSQP…YVKWIEDTIA (230 aa)). Disulfide bonds link cysteine 31-cysteine 169, cysteine 47-cysteine 63, cysteine 148-cysteine 215, cysteine 180-cysteine 194, and cysteine 205-cysteine 230. The active-site Charge relay system is histidine 62. Serine 90 carries O-linked (GalNAc...) serine glycosylation. Asparagine 99 is a glycosylation site (N-linked (GlcNAc...) asparagine). O-linked (GalNAc...) serine glycosylation is present at serine 101. Asparagine 105 carries an N-linked (GlcNAc...) asparagine glycan. Residue aspartate 116 is the Charge relay system of the active site. N-linked (GlcNAc...) asparagine glycosylation is present at asparagine 160. Serine 162 carries an O-linked (GalNAc...) serine glycan. Catalysis depends on serine 209, which acts as the Charge relay system.

The protein belongs to the peptidase S1 family. Kallikrein subfamily.

The catalysed reaction is Preferential cleavage of Arg-|-Xaa bonds in small molecule substrates. Highly selective action to release kallidin (lysyl-bradykinin) from kininogen involves hydrolysis of Met-|-Xaa or Leu-|-Xaa.. In terms of biological role, glandular kallikreins cleave Met-Lys and Arg-Ser bonds in kininogen to release Lys-bradykinin. The sequence is that of Kallikrein-1 (KLK1) from Macaca fascicularis (Crab-eating macaque).